We begin with the raw amino-acid sequence, 947 residues long: Isoleucine--tRNA ligase (947 aa).

Residues 57–67 (PYANGNIHLGH) carry the 'HIGH' region motif. Glutamate 568 contributes to the L-isoleucyl-5'-AMP binding site. The 'KMSKS' region signature appears at 609–613 (KMSKS). Lysine 612 lines the ATP pocket. The Zn(2+) site is built by cysteine 908, cysteine 911, cysteine 926, and cysteine 929.

It belongs to the class-I aminoacyl-tRNA synthetase family. IleS type 1 subfamily. In terms of assembly, monomer. Zn(2+) is required as a cofactor.

The protein resides in the cytoplasm. It catalyses the reaction tRNA(Ile) + L-isoleucine + ATP = L-isoleucyl-tRNA(Ile) + AMP + diphosphate. Catalyzes the attachment of isoleucine to tRNA(Ile). As IleRS can inadvertently accommodate and process structurally similar amino acids such as valine, to avoid such errors it has two additional distinct tRNA(Ile)-dependent editing activities. One activity is designated as 'pretransfer' editing and involves the hydrolysis of activated Val-AMP. The other activity is designated 'posttransfer' editing and involves deacylation of mischarged Val-tRNA(Ile). The sequence is that of Isoleucine--tRNA ligase from Persephonella marina (strain DSM 14350 / EX-H1).